The chain runs to 469 residues: Proline--tRNA ligase (469 aa).

The protein belongs to the class-II aminoacyl-tRNA synthetase family. ProS type 3 subfamily. Homodimer.

Its subcellular location is the cytoplasm. It catalyses the reaction tRNA(Pro) + L-proline + ATP = L-prolyl-tRNA(Pro) + AMP + diphosphate. Its function is as follows. Catalyzes the attachment of proline to tRNA(Pro) in a two-step reaction: proline is first activated by ATP to form Pro-AMP and then transferred to the acceptor end of tRNA(Pro). This chain is Proline--tRNA ligase, found in Methanosphaera stadtmanae (strain ATCC 43021 / DSM 3091 / JCM 11832 / MCB-3).